Consider the following 302-residue polypeptide: Transmembrane protein 191C (302 aa).

Disordered stretches follow at residues 1–21 and 54–73; these read MAAT…GRQR and LRRR…EAAR. The stretch at 5 to 160 forms a coiled coil; sequence QELLLQLQKD…EKLQQDALQT (156 aa). A helical membrane pass occupies residues 238–258; it reads VLGALQVLLTLPLLFLGLSLL.

It belongs to the TMEM191 family.

It localises to the membrane. This chain is Transmembrane protein 191C, found in Homo sapiens (Human).